The sequence spans 479 residues: Glutamate--tRNA ligase (479 aa).

The short motif at proline 11 to glycine 21 is the 'HIGH' region element. Cysteine 108, cysteine 110, cysteine 135, and glutamate 137 together coordinate Zn(2+). The short motif at lysine 250–arginine 254 is the 'KMSKS' region element. Lysine 253 contributes to the ATP binding site.

Belongs to the class-I aminoacyl-tRNA synthetase family. Glutamate--tRNA ligase type 1 subfamily. In terms of assembly, monomer. It depends on Zn(2+) as a cofactor.

It is found in the cytoplasm. It carries out the reaction tRNA(Glu) + L-glutamate + ATP = L-glutamyl-tRNA(Glu) + AMP + diphosphate. Functionally, catalyzes the attachment of glutamate to tRNA(Glu) in a two-step reaction: glutamate is first activated by ATP to form Glu-AMP and then transferred to the acceptor end of tRNA(Glu). The chain is Glutamate--tRNA ligase from Myxococcus xanthus (strain DK1622).